Here is a 545-residue protein sequence, read N- to C-terminus: Probable bifunctional tRNA threonylcarbamoyladenosine biosynthesis protein (545 aa).

Residues 1-329 form a kae1 region; sequence MKNTFILGIE…YRTDDVKVTW (329 aa). 3 residues coordinate Fe cation: His-113, His-117, and Tyr-134. Residues 134 to 138, Asp-166, Gly-179, Glu-183, and Asn-262 contribute to the L-threonylcarbamoyladenylate site; that span reads YVSGA. Asp-290 is a Fe cation binding site. Residues 340–545 enclose the Protein kinase domain; sequence EISPGTSLKL…EEIKKRARYA (206 aa). ATP contacts are provided by residues 353 to 361 and Lys-375; that span reads LDNGAEAIV. Catalysis depends on Asp-462, which acts as the Proton acceptor; for kinase activity.

The protein in the N-terminal section; belongs to the KAE1 / TsaD family. This sequence in the C-terminal section; belongs to the protein kinase superfamily. Tyr protein kinase family. BUD32 subfamily. In terms of assembly, component of the KEOPS complex that consists of Kae1, Bud32, Cgi121 and Pcc1; the whole complex dimerizes. The cofactor is Fe(2+).

Its subcellular location is the cytoplasm. The catalysed reaction is L-seryl-[protein] + ATP = O-phospho-L-seryl-[protein] + ADP + H(+). The enzyme catalyses L-threonyl-[protein] + ATP = O-phospho-L-threonyl-[protein] + ADP + H(+). It carries out the reaction L-threonylcarbamoyladenylate + adenosine(37) in tRNA = N(6)-L-threonylcarbamoyladenosine(37) in tRNA + AMP + H(+). Functionally, required for the formation of a threonylcarbamoyl group on adenosine at position 37 (t(6)A37) in tRNAs that read codons beginning with adenine. Is a component of the KEOPS complex that is probably involved in the transfer of the threonylcarbamoyl moiety of threonylcarbamoyl-AMP (TC-AMP) to the N6 group of A37. The Kae1 domain likely plays a direct catalytic role in this reaction. The Bud32 domain probably displays kinase activity that regulates Kae1 function. The sequence is that of Probable bifunctional tRNA threonylcarbamoyladenosine biosynthesis protein from Methanosarcina barkeri (strain Fusaro / DSM 804).